The sequence spans 197 residues: MAIKDLFNNFFLMDDEEEVESPEERQRRVVQNEENETNNVQQNQPQQSERSYSNQSKLKTVPQKKTTRNYNSEERNVRMNQPPSKSNGKNVVTMNQTSQSYSGYESSKMCLFEPRVFSDTQDIADELKNRRATLVNLQRIDKISAKRIIDFLSGTVYAIGGDIQRVGTDIFLCTPDNVEVAGSITDHIEQMESQHYE.

The interval 15 to 91 (DEEEVESPEE…PPSKSNGKNV (77 aa)) is disordered. Over residues 22–31 (PEERQRRVVQ) the composition is skewed to basic and acidic residues. Low complexity predominate over residues 37–47 (TNNVQQNQPQQ). Composition is skewed to polar residues over residues 48-58 (SERSYSNQSKL) and 78-91 (RMNQ…GKNV).

Belongs to the SepF family. In terms of assembly, homodimer. Interacts with FtsZ.

The protein localises to the cytoplasm. Its function is as follows. Cell division protein that is part of the divisome complex and is recruited early to the Z-ring. Probably stimulates Z-ring formation, perhaps through the cross-linking of FtsZ protofilaments. Its function overlaps with FtsA. In Staphylococcus haemolyticus (strain JCSC1435), this protein is Cell division protein SepF.